The chain runs to 137 residues: BolA-like protein 1 (137 aa).

Ser81 carries the post-translational modification Phosphoserine. The disordered stretch occupies residues 114–137 (WRENSQLDTSPPCLGGNKKTLGTP).

It belongs to the BolA/IbaG family. In terms of assembly, interacts with GLRX5. Widely expressed.

It localises to the mitochondrion. In terms of biological role, acts as a mitochondrial iron-sulfur (Fe-S) cluster assembly factor that facilitates (Fe-S) cluster insertion into a subset of mitochondrial proteins. Probably acts together with the monothiol glutaredoxin GLRX5. May protect cells against oxidative stress. In Homo sapiens (Human), this protein is BolA-like protein 1.